Reading from the N-terminus, the 590-residue chain is Muscarinic acetylcholine receptor M3 (590 aa).

Residues 1-67 (MTLHNNSTTS…DPLGGHTVWQ (67 aa)) are Extracellular-facing. N-linked (GlcNAc...) asparagine glycans are attached at residues asparagine 5, asparagine 6, asparagine 15, asparagine 41, and asparagine 48. Residues 68–91 (VVFIAFLTGILALVTIIGNILVIV) form a helical membrane-spanning segment. Topologically, residues 92 to 104 (SFKVNKQLKTVNN) are cytoplasmic. Residues 105-130 (YFLLSLACADLIIGVISMNLFTTYII) traverse the membrane as a helical segment. Residues 131–142 (MNRWALGNLACD) lie on the Extracellular side of the membrane. A disulfide bridge connects residues cysteine 141 and cysteine 221. Residues 143-164 (LWLAIDYVASNASVMNLLVISF) form a helical membrane-spanning segment. The Cytoplasmic segment spans residues 165–184 (DRYFSITRPLTYRAKRTTKR). Residues 185 to 206 (AGVMIGLAWVISFVLWAPAILF) traverse the membrane as a helical segment. At 207 to 229 (WQYFVGKRTVPPGECFIQFLSEP) the chain is on the extracellular side. A helical transmembrane segment spans residues 230-252 (TITFGTAIAAFYMPVTIMTILYW). The Cytoplasmic segment spans residues 253 to 491 (RIYKETEKRT…SLVKEKKAAQ (239 aa)). The Basolateral sorting signal motif lies at 275–281 (AETENFV). The interval 323–357 (SSEQMDQDHSSSDSWNNNDAAASLENSASSDEEDI) is disordered. Residues 334-345 (SDSWNNNDAAAS) show a composition bias toward low complexity. Residue serine 385 is modified to Phosphoserine. A helical membrane pass occupies residues 492 to 514 (TLSAILLAFIITWTPYNIMVLVN). Over 515-526 (TFCDSCIPKTFW) the chain is Extracellular. Cysteine 517 and cysteine 520 are disulfide-bonded. A helical membrane pass occupies residues 527–546 (NLGYWLCYINSTVNPVCYAL). Topologically, residues 547 to 590 (CNKTFRTTFKMLLLCQCGKKKRRKQQYQQRQSVIFHKRAPEQAL) are cytoplasmic.

This sequence belongs to the G-protein coupled receptor 1 family. Muscarinic acetylcholine receptor subfamily. CHRM3 sub-subfamily. Homodimer; the dimers can form tetramers. Interacts with NALCN. Interacts with TMEM147.

It localises to the cell membrane. It is found in the postsynaptic cell membrane. The protein localises to the basolateral cell membrane. The protein resides in the endoplasmic reticulum membrane. The muscarinic acetylcholine receptor mediates various cellular responses, including inhibition of adenylate cyclase, breakdown of phosphoinositides and modulation of potassium channels through the action of G proteins. Primary transducing effect is Pi turnover. The chain is Muscarinic acetylcholine receptor M3 (CHRM3) from Gorilla gorilla gorilla (Western lowland gorilla).